A 153-amino-acid chain; its full sequence is MKTFVLHIFIFALVAFASASRDSAKKIGSQYDNYATCLTEHSLTEDDIFSIGEVSSGQHKTNHEETELHKNGCVMQCMLEKDGLMSGADYDEEKMREDYIKETGAQPGDQRIEALNACMHETKDMEDKCDKSLLLVACVLAAEAVLADSNEGA.

A signal peptide spans 1 to 19; the sequence is MKTFVLHIFIFALVAFASA. Disulfide bonds link Cys-37–Cys-77, Cys-73–Cys-129, and Cys-118–Cys-138.

It belongs to the PBP/GOBP family. Homodimer.

The protein resides in the secreted. Colony queen number, a major feature of social organization, is associated with worker genotype for Gp-9. Colonies are headed by either a single reproductive queen (monogyne form) or multiple queens (polygyne form). Differences in worker Gp-9 genotypes between social forms may cause differences in workers' abilities to recognize queens and regulate their numbers. This is Pheromone-binding protein Gp-9 from Solenopsis n. sp. (strain JP-2002) (Fire ant).